We begin with the raw amino-acid sequence, 687 residues long: Polyphosphate kinase (687 aa).

Asparagine 45 is an ATP binding site. Mg(2+)-binding residues include arginine 373 and arginine 403. The Phosphohistidine intermediate role is filled by histidine 433. ATP contacts are provided by tyrosine 466, arginine 562, and histidine 590. The region spanning 585–615 (DRFLEHDRVYVFENKGDKLVYLSSADWMTRN) is the PLD phosphodiesterase domain.

Belongs to the polyphosphate kinase 1 (PPK1) family. Mg(2+) serves as cofactor. Post-translationally, an intermediate of this reaction is the autophosphorylated ppk in which a phosphate is covalently linked to a histidine residue through a N-P bond.

It catalyses the reaction [phosphate](n) + ATP = [phosphate](n+1) + ADP. Functionally, catalyzes the reversible transfer of the terminal phosphate of ATP to form a long-chain polyphosphate (polyP). The protein is Polyphosphate kinase of Yersinia pestis.